Reading from the N-terminus, the 402-residue chain is DNA primase DnaG (402 aa).

The Toprim domain maps to 165 to 243 (PNLIIVEGRA…KIDFVARAPV (79 aa)). Residues glutamate 171, aspartate 216, and aspartate 218 each coordinate Mg(2+).

Belongs to the archaeal DnaG primase family. In terms of assembly, forms a ternary complex with MCM helicase and DNA. Component of the archaeal exosome complex. It depends on Mg(2+) as a cofactor.

It catalyses the reaction ssDNA + n NTP = ssDNA/pppN(pN)n-1 hybrid + (n-1) diphosphate.. RNA polymerase that catalyzes the synthesis of short RNA molecules used as primers for DNA polymerase during DNA replication. Also part of the exosome, which is a complex involved in RNA degradation. Acts as a poly(A)-binding protein that enhances the interaction between heteromeric, adenine-rich transcripts and the exosome. This Saccharolobus islandicus (strain Y.N.15.51 / Yellowstone #2) (Sulfolobus islandicus) protein is DNA primase DnaG.